Here is a 67-residue protein sequence, read N- to C-terminus: Large ribosomal subunit protein uL29 (67 aa).

This sequence belongs to the universal ribosomal protein uL29 family.

The polypeptide is Large ribosomal subunit protein uL29 (Polaromonas naphthalenivorans (strain CJ2)).